Reading from the N-terminus, the 346-residue chain is Probable RNA methyltransferase PA1839 (346 aa).

Catalysis depends on Glu91, which acts as the Proton acceptor. The region spanning 94 to 320 is the Radical SAM core domain; the sequence is LLPRGGLCVS…TKVRNSAGQD (227 aa). Residues Cys101 and Cys325 are joined by a disulfide bond. Positions 108, 112, and 115 each coordinate [4Fe-4S] cluster. S-adenosyl-L-methionine-binding positions include 153–154, Ser183, 206–208, and Asn282; these read GE and SLH. Cys325 serves as the catalytic S-methylcysteine intermediate.

Belongs to the radical SAM superfamily. RlmN family. It depends on [4Fe-4S] cluster as a cofactor.

It localises to the cytoplasm. The sequence is that of Probable RNA methyltransferase PA1839 from Pseudomonas aeruginosa (strain ATCC 15692 / DSM 22644 / CIP 104116 / JCM 14847 / LMG 12228 / 1C / PRS 101 / PAO1).